A 197-amino-acid chain; its full sequence is Rac-like GTP-binding protein RAC1 (197 aa).

Position 13–20 (13–20 (GDGAVGKT)) interacts with GTP. An Effector region motif is present at residues 35 to 43 (YVPTVFDNF). Residues 60–64 (DTAGQ) and 118–121 (TKLD) contribute to the GTP site. C194 bears the Cysteine methyl ester mark. Residue C194 is the site of S-geranylgeranyl cysteine attachment. The propeptide at 195–197 (SIL) is removed in mature form.

The protein belongs to the small GTPase superfamily. Rho family.

It localises to the cytoplasm. Its subcellular location is the membrane. Inactive GDP-bound Rho GTPases reside in the cytosol, are found in a complex with Rho GDP-dissociation inhibitors (Rho GDIs), and are released from the GDI protein in order to translocate to membranes upon activation. This Lotus japonicus (Lotus corniculatus var. japonicus) protein is Rac-like GTP-binding protein RAC1 (RAC1).